Here is a 146-residue protein sequence, read N- to C-terminus: Snaclec 5 (146 aa).

Positions 1-23 are cleaved as a signal peptide; it reads MGRFIFISFGLLVVFLSLSGTEA. Intrachain disulfides connect cysteine 25–cysteine 36, cysteine 53–cysteine 142, and cysteine 119–cysteine 134. The 112-residue stretch at 32 to 143 folds into the C-type lectin domain; sequence YEGHCYRVFD…CRNYGHFVCK (112 aa).

The protein belongs to the snaclec family. As to quaternary structure, heterodimer; disulfide-linked. Expressed by the venom gland.

It is found in the secreted. Functionally, interferes with one step of hemostasis (modulation of platelet aggregation, or coagulation cascade, for example). The protein is Snaclec 5 of Echis pyramidum leakeyi (Leakey's carpet viper).